The chain runs to 286 residues: Putative L-ribulose-5-phosphate 3-epimerase SgbU (286 aa).

The protein belongs to the L-ribulose-5-phosphate 3-epimerase family.

The enzyme catalyses L-ribulose 5-phosphate = L-xylulose 5-phosphate. In terms of biological role, catalyzes the isomerization of L-xylulose-5-phosphate to L-ribulose-5-phosphate (Potential). May be involved in the utilization of 2,3-diketo-L-gulonate. The chain is Putative L-ribulose-5-phosphate 3-epimerase SgbU (sgbU) from Escherichia coli (strain K12).